The primary structure comprises 206 residues: Small ribosomal subunit protein uS4A (206 aa).

The S4 RNA-binding domain occupies Met98–Asn163.

The protein belongs to the universal ribosomal protein uS4 family. Part of the 30S ribosomal subunit. Contacts protein S5. The interaction surface between S4 and S5 is involved in control of translational fidelity.

Its function is as follows. One of the primary rRNA binding proteins, it binds directly to 16S rRNA where it nucleates assembly of the body of the 30S subunit. Functionally, with S5 and S12 plays an important role in translational accuracy. The chain is Small ribosomal subunit protein uS4A from Clostridium perfringens (strain ATCC 13124 / DSM 756 / JCM 1290 / NCIMB 6125 / NCTC 8237 / Type A).